The primary structure comprises 458 residues: Exodeoxyribonuclease 7 large subunit (458 aa).

This sequence belongs to the XseA family. Heterooligomer composed of large and small subunits.

The protein localises to the cytoplasm. The enzyme catalyses Exonucleolytic cleavage in either 5'- to 3'- or 3'- to 5'-direction to yield nucleoside 5'-phosphates.. Functionally, bidirectionally degrades single-stranded DNA into large acid-insoluble oligonucleotides, which are then degraded further into small acid-soluble oligonucleotides. The sequence is that of Exodeoxyribonuclease 7 large subunit from Yersinia pseudotuberculosis serotype O:1b (strain IP 31758).